Reading from the N-terminus, the 234-residue chain is Sugar fermentation stimulation protein homolog (234 aa).

This sequence belongs to the SfsA family.

In Shewanella frigidimarina (strain NCIMB 400), this protein is Sugar fermentation stimulation protein homolog.